Here is a 328-residue protein sequence, read N- to C-terminus: DNA-directed RNA polymerase subunit alpha (328 aa).

Residues 1-231 (MIYQMQMPAK…EHVTFFANFS (231 aa)) are alpha N-terminal domain (alpha-NTD). Residues 247 to 328 (DEFETMRRLL…MDITRYQMKG (82 aa)) are alpha C-terminal domain (alpha-CTD).

This sequence belongs to the RNA polymerase alpha chain family. Homodimer. The RNAP catalytic core consists of 2 alpha, 1 beta, 1 beta' and 1 omega subunit. When a sigma factor is associated with the core the holoenzyme is formed, which can initiate transcription.

It catalyses the reaction RNA(n) + a ribonucleoside 5'-triphosphate = RNA(n+1) + diphosphate. Its function is as follows. DNA-dependent RNA polymerase catalyzes the transcription of DNA into RNA using the four ribonucleoside triphosphates as substrates. The sequence is that of DNA-directed RNA polymerase subunit alpha from Chlorobium luteolum (strain DSM 273 / BCRC 81028 / 2530) (Pelodictyon luteolum).